Here is a 53-residue protein sequence, read N- to C-terminus: Light-harvesting protein B800/850/890 beta-1 chain (53 aa).

Residues 1 to 19 (ADNMSLTGLSDEEAKEFHS) lie on the Cytoplasmic side of the membrane. Positions 18 and 36 each coordinate a bacteriochlorophyll. Residues 20 to 42 (IFMQSFLIFTAVAVVAHFLAWAW) form a helical membrane-spanning segment. Residues 43 to 53 (RPWIPGAEGYG) are Periplasmic-facing.

The protein belongs to the antenna complex beta subunit family. As to quaternary structure, the core complex is formed by different alpha and beta chains, binding bacteriochlorophyll molecules, and arranged most probably in tetrameric structures disposed around the reaction center. The non-pigmented gamma chains may constitute additional components.

It localises to the cell inner membrane. Antenna complexes are light-harvesting systems, which transfer the excitation energy to the reaction centers. This chain is Light-harvesting protein B800/850/890 beta-1 chain, found in Halorhodospira halophila (strain DSM 244 / SL1) (Ectothiorhodospira halophila (strain DSM 244 / SL1)).